Consider the following 295-residue polypeptide: Cyclin-G1 (295 aa).

This sequence belongs to the cyclin family. Cyclin G subfamily.

Its subcellular location is the nucleus. In terms of biological role, may play a role in growth regulation. Is associated with G2/M phase arrest in response to DNA damage. May be an intermediate by which p53 mediates its role as an inhibitor of cellular proliferation. In Bos taurus (Bovine), this protein is Cyclin-G1 (CCNG1).